The chain runs to 383 residues: MGASQKNQELIGGLILFSAALLAIVVNNSPLASYYAMLETINVKLGIENLVIDKNLMHWINDGLMAIYFLYIGLEIKREIIVGTLSKPSNIITPAIAAFAGLAMPSLIYLSINHDIKVINGWAIPSATDIAFTLGILALLGTRVPAKLKLLVITIAIFDDIAAIAIIAIFYTKSLSLLSLSLGTLFILAMIICNRIFKINRSSVYVVLGFFAWFCTIKSGVHATLAGFTTALCIPFRENDKDSPANFMEDSLHPWIIYFILPVFAFANAGISFSGISFSILFEPITLGIILGLFVGKQLGIFSILAVFKKLKWFKLGESFSNLQLYGISLLCGIGFTMSLFIGVLAFNDTHLLNAIKIGVVVGSVLSGFFGYIVLRFIVTNPS.

The next 11 membrane-spanning stretches (helical) occupy residues 10–30 (LIGG…NNSP), 56–76 (LMHW…GLEI), 91–111 (IITP…IYLS), 121–141 (GWAI…ALLG), 150–170 (LLVI…IAIF), 174–194 (SLSL…IICN), 206–226 (VVLG…ATLA), 254–274 (PWII…ISFS), 275–295 (GISF…GLFV), 327–347 (GISL…VLAF), and 355–375 (AIKI…YIVL).

It belongs to the NhaA Na(+)/H(+) (TC 2.A.33) antiporter family.

It localises to the cell inner membrane. The enzyme catalyses Na(+)(in) + 2 H(+)(out) = Na(+)(out) + 2 H(+)(in). Functionally, na(+)/H(+) antiporter that extrudes sodium in exchange for external protons. In Francisella tularensis subsp. novicida (strain U112), this protein is Na(+)/H(+) antiporter NhaA.